Consider the following 88-residue polypeptide: Large ribosomal subunit protein bL27 (88 aa).

Belongs to the bacterial ribosomal protein bL27 family.

The chain is Large ribosomal subunit protein bL27 from Carboxydothermus hydrogenoformans (strain ATCC BAA-161 / DSM 6008 / Z-2901).